We begin with the raw amino-acid sequence, 958 residues long: Glycine dehydrogenase (decarboxylating) (958 aa).

An N6-(pyridoxal phosphate)lysine modification is found at Lys708.

The protein belongs to the GcvP family. The glycine cleavage system is composed of four proteins: P, T, L and H. Requires pyridoxal 5'-phosphate as cofactor.

It carries out the reaction N(6)-[(R)-lipoyl]-L-lysyl-[glycine-cleavage complex H protein] + glycine + H(+) = N(6)-[(R)-S(8)-aminomethyldihydrolipoyl]-L-lysyl-[glycine-cleavage complex H protein] + CO2. Its function is as follows. The glycine cleavage system catalyzes the degradation of glycine. The P protein binds the alpha-amino group of glycine through its pyridoxal phosphate cofactor; CO(2) is released and the remaining methylamine moiety is then transferred to the lipoamide cofactor of the H protein. The sequence is that of Glycine dehydrogenase (decarboxylating) from Photorhabdus laumondii subsp. laumondii (strain DSM 15139 / CIP 105565 / TT01) (Photorhabdus luminescens subsp. laumondii).